Consider the following 134-residue polypeptide: kinetoplast-associated protein 3 (134 aa).

Residues 1–10 constitute a propeptide that is removed on maturation; sequence MLRRSPTLLR. Residues 106–124 are compositionally biased toward low complexity; it reads PKAPKAAKSASSKVKTAAK. Positions 106 to 134 are disordered; the sequence is PKAPKAAKSASSKVKTAAKTAKKTTAARK. The span at 125–134 shows a compositional bias: basic residues; it reads TAKKTTAARK.

This sequence belongs to the KAP family. In terms of assembly, associates with the kinetoplast DNA network.

The protein localises to the mitochondrion matrix. Its subcellular location is the kinetoplast. Histone H1-like DNA-binding protein involved in the organization and segregation of kinetoplast DNA (kDNA). The mitochondrial DNA of kinetoplastid protozoa consists of about 5,000 minicircles and 20 to 30 maxicircles. These circular DNAs are held together by catenation into a highly organized compact disk structure referred to as a kinetoplast DNA (kDNA) network. Binds preferentially to a specific fragment of minicircle DNA and is able to compact kDNA networks through DNA charge neutralization and condensation. The sequence is that of kinetoplast-associated protein 3 (KAP3) from Crithidia fasciculata.